We begin with the raw amino-acid sequence, 311 residues long: Probable cell division protein WhiA (311 aa).

The segment at residues Thr277–Glu311 is a DNA-binding region (H-T-H motif).

This sequence belongs to the WhiA family.

Functionally, involved in cell division and chromosome segregation. This Lactobacillus acidophilus (strain ATCC 700396 / NCK56 / N2 / NCFM) protein is Probable cell division protein WhiA.